The primary structure comprises 220 residues: MGQKVHPIGFRLGVIKTWDSKWFEHKNYAQWLHEDIRIREFVKKSLNHAGVSKVEIERAANKVKVNVHTARPGIVIGKRGAGIETVKKDLQQFTKNEVFLNIVEVRKAETDAQLVAENIATQLERRIAFRRAMKKALQTAMKFGAKGIRVACSGRLGGAEMARYEWYREGRVPLHTLRADIDYGFAEAKTTYGKIGCKVWVCKGEVLPGKGGQAPMPSNR.

Residues 38–106 enclose the KH type-2 domain; sequence IREFVKKSLN…EVFLNIVEVR (69 aa).

Belongs to the universal ribosomal protein uS3 family. As to quaternary structure, part of the 30S ribosomal subunit. Forms a tight complex with proteins S10 and S14.

Binds the lower part of the 30S subunit head. Binds mRNA in the 70S ribosome, positioning it for translation. The polypeptide is Small ribosomal subunit protein uS3 (Myxococcus xanthus (strain DK1622)).